We begin with the raw amino-acid sequence, 595 residues long: Coagulation factor XII (595 aa).

Positions 1-19 (MTALLFLGSLLMSLDLTLS) are cleaved as a signal peptide. Residues 41 to 89 (VDGKLCHFPFQYHRRLYHKCIHKGQPGSRPWCATTPNFDEDQQWGYCLE) enclose the Fibronectin type-II domain. 13 disulfides stabilise this stretch: Cys-46-Cys-72, Cys-60-Cys-87, Cys-97-Cys-109, Cys-103-Cys-118, Cys-120-Cys-129, Cys-134-Cys-162, Cys-160-Cys-169, Cys-177-Cys-188, Cys-182-Cys-197, Cys-199-Cys-208, Cys-216-Cys-294, Cys-237-Cys-276, and Cys-265-Cys-289. Residues 93–130 (VKDHCSKHSPCHKGGTCVNTPNGPHCLCPEHLTGKHCQ) enclose the EGF-like 1 domain. An O-linked (Fuc) threonine glycan is attached at Thr-108. Residues 132–172 (EKCFESQLLKFFHENEIWFRTGPGGVARCQCKGPQAVCKLL) form the Fibronectin type-I domain. One can recognise an EGF-like 2 domain in the interval 173-209 (TSQVCRVNPCLNGGTCLLVEDHRLCHCPAGYAGPFCD). Positions 215–294 (TCYEDRGLSY…SWDYCDLEQC (80 aa)) constitute a Kringle domain. A glycan (N-linked (GlcNAc...) asparagine) is linked at Asn-248. The O-linked (GalNAc...) threonine glycan is linked to Thr-298. The interval 302–332 (PVSPESHDMLKPRPPILQSSPRDSTRNQNVV) is disordered. A glycan (O-linked (GalNAc...) serine) is linked at Ser-307. The span at 318 to 332 (LQSSPRDSTRNQNVV) shows a compositional bias: polar residues. Residue Thr-326 is glycosylated (O-linked (GalNAc...) threonine). Intrachain disulfides connect Cys-340–Cys-466, Cys-378–Cys-394, Cys-386–Cys-455, Cys-417–Cys-420, Cys-480–Cys-549, Cys-512–Cys-528, and Cys-539–Cys-570. Residues 354-594 (VVGGLVALPG…YLDWIQEHTA (241 aa)) form the Peptidase S1 domain. His-393 functions as the Charge relay system in the catalytic mechanism. The N-linked (GlcNAc...) asparagine glycan is linked to Asn-414. The active-site Charge relay system is Asp-442. Ser-543 (charge relay system) is an active-site residue.

Belongs to the peptidase S1 family. Interacts with HRG; the interaction, which is enhanced in the presence of zinc ions and inhibited by heparin-binding, inhibits factor XII autoactivation and contact-initiated coagulation. O- and N-glycosylated.

It is found in the secreted. The catalysed reaction is Selective cleavage of Arg-|-Ile bonds in factor VII to form factor VIIa and factor XI to form factor XIa.. Its activity is regulated as follows. Activity is promoted in the presence of negatively charged surfaces. Its function is as follows. Factor XII is a serum glycoprotein that participates in the initiation of blood coagulation, fibrinolysis, and the generation of bradykinin and angiotensin. Prekallikrein is cleaved by factor XII to form kallikrein, which then cleaves factor XII first to alpha-factor XIIa and then trypsin cleaves it to beta-factor XIIa. Alpha-factor XIIa activates factor XI to factor XIa. This Rattus norvegicus (Rat) protein is Coagulation factor XII (F12).